Reading from the N-terminus, the 286-residue chain is MIDFLDVQKETPRIRIAIDRVGVKNIKFPLKIHDDFAFLTLNLFVDVPADRKGADMSRAVESIQKVINAGSYGERIGDIGIAICDEALSRFNYSEKAQCEVNIQYYRRSGERYLEYRMYVETAKDRKQIMKNEIGISYVTMTACPCAMETTRALISMDNPDISDAISAIPTITHNQRNVTKLTVDNRSKMITVWDLADVMERVQGKPLDSLLKRVEEGRLVYSAHRNPKFVEDVVREIAYEAARVLGVPDEATIKVSSESDESIHPHNAYAEIDTTAGELRKLHLH.

This sequence belongs to the GTP cyclohydrolase IV family. Homodimer. Requires Fe(2+) as cofactor.

It catalyses the reaction GTP + H2O = 7,8-dihydroneopterin 2',3'-cyclic phosphate + formate + diphosphate + H(+). Its pathway is cofactor biosynthesis; 5,6,7,8-tetrahydromethanopterin biosynthesis. In terms of biological role, converts GTP to 7,8-dihydro-D-neopterin 2',3'-cyclic phosphate, the first intermediate in the biosynthesis of coenzyme methanopterin. The polypeptide is GTP cyclohydrolase MptA (Thermoplasma acidophilum (strain ATCC 25905 / DSM 1728 / JCM 9062 / NBRC 15155 / AMRC-C165)).